Reading from the N-terminus, the 358-residue chain is Neutral protease 2 homolog MGYG_02351 (358 aa).

The first 17 residues, 1-17 (MQFVALLAALGAPLALA), serve as a signal peptide directing secretion. The propeptide occupies 18–183 (ASIPAAHNNS…DSPAGVIDKR (166 aa)). 2 disulfides stabilise this stretch: C191/C260 and C267/C285. H309 provides a ligand contact to Zn(2+). The active site involves E310. Zn(2+) is bound by residues H313 and D324.

This sequence belongs to the peptidase M35 family. Zn(2+) serves as cofactor.

Its subcellular location is the secreted. It carries out the reaction Preferential cleavage of bonds with hydrophobic residues in P1'. Also 3-Asn-|-Gln-4 and 8-Gly-|-Ser-9 bonds in insulin B chain.. In terms of biological role, secreted metalloproteinase that allows assimilation of proteinaceous substrates. Shows high activities on basic nuclear substrates such as histone and protamine. May be involved in virulence. The protein is Neutral protease 2 homolog MGYG_02351 of Arthroderma gypseum (strain ATCC MYA-4604 / CBS 118893) (Microsporum gypseum).